The primary structure comprises 92 residues: Long neurotoxin 3FTx-Oxy2 (92 aa).

The first 21 residues, 1–21 (MKTLLLTLVVVTIVCLDLGYT), serve as a signal peptide directing secretion. 4 cysteine pairs are disulfide-bonded: Cys24–Cys42, Cys35–Cys63, Cys67–Cys79, and Cys80–Cys85.

The protein belongs to the three-finger toxin family. Long-chain subfamily. Type II alpha-neurotoxin sub-subfamily. In terms of tissue distribution, expressed by the venom gland.

It localises to the secreted. Functionally, binds with high affinity to muscular (alpha-1/CHRNA1) and neuronal (alpha-7/CHRNA7) nicotinic acetylcholine receptor (nAChR) and inhibits acetylcholine from binding to the receptor, thereby impairing neuromuscular and neuronal transmission. The protein is Long neurotoxin 3FTx-Oxy2 of Oxyuranus microlepidotus (Inland taipan).